The primary structure comprises 141 residues: Hemoglobin subunit alpha (141 aa).

Residues 1-141 (VLSAADKGNV…VSTVLTSKYR (141 aa)) form the Globin domain. Phosphoserine is present on serine 3. Lysine 7 and lysine 11 each carry N6-succinyllysine. Lysine 16 is modified (N6-acetyllysine; alternate). Lysine 16 bears the N6-succinyllysine; alternate mark. Tyrosine 24 bears the Phosphotyrosine mark. Residue serine 35 is modified to Phosphoserine. The residue at position 40 (lysine 40) is an N6-succinyllysine. Histidine 58 is a binding site for O2. Histidine 87 contacts heme b. Phosphoserine is present on serine 102. Phosphothreonine is present on threonine 108. Serine 124 and serine 131 each carry phosphoserine. Residues threonine 134 and threonine 137 each carry the phosphothreonine modification. The residue at position 138 (serine 138) is a Phosphoserine.

This sequence belongs to the globin family. In terms of assembly, heterotetramer of two alpha chains and two beta chains. As to expression, red blood cells.

In terms of biological role, involved in oxygen transport from the lung to the various peripheral tissues. Hemopressin acts as an antagonist peptide of the cannabinoid receptor CNR1. Hemopressin-binding efficiently blocks cannabinoid receptor CNR1 and subsequent signaling. In Macrotus californicus (Californian leaf-nosed bat), this protein is Hemoglobin subunit alpha (HBA).